The primary structure comprises 291 residues: Probable 2-(5''-triphosphoribosyl)-3'-dephosphocoenzyme-A synthase (291 aa).

The protein belongs to the CitG/MdcB family.

The enzyme catalyses 3'-dephospho-CoA + ATP = 2'-(5''-triphospho-alpha-D-ribosyl)-3'-dephospho-CoA + adenine. Involved in the formation of 2-(5''-phosphoribosyl)-3'-dephosphocoenzyme-A, the prosthetic group of the acyl-carrier protein of the malonate decarboxylase. The sequence is that of Probable 2-(5''-triphosphoribosyl)-3'-dephosphocoenzyme-A synthase from Pseudomonas syringae pv. tomato (strain ATCC BAA-871 / DC3000).